The primary structure comprises 275 residues: COP9 signalosome complex subunit 7a (275 aa).

N-acetylserine is present on Ser-2. The 158-residue stretch at 2–159 folds into the PCI domain; that stretch reads SAEVKVTGQN…QRLEVDYSIG (158 aa). Positions 185 to 233 form a coiled coil; sequence LSGIEEQVSRANQHKEQQLGLKQQIESEVANLKKTIKVTTAAAAAATSQ. The disordered stretch occupies residues 227-275; the sequence is AAAATSQDPEQHLTELREPAPGTNQRQPSKKASKGKGLRGSAKIWSKSN. The segment covering 235–244 has biased composition (basic and acidic residues); sequence PEQHLTELRE. Positions 254-263 are enriched in basic residues; that stretch reads PSKKASKGKG.

It belongs to the CSN7/EIF3M family. CSN7 subfamily. Component of the CSN complex, composed of COPS1/GPS1, COPS2, COPS3, COPS4, COPS5, COPS6, COPS7 (COPS7A or COPS7B), COPS8 and COPS9. In the complex, it probably interacts directly with COPS1, COPS2, COPS4, COPS5, COPS6 and COPS8. Interacts with PMF1. Interacts with the translation initiation factor EIF3S6. Interacts with CK2 and PKD. Interacts directly with ID3. In terms of processing, phosphorylated by CK2 and PKD kinases.

Its subcellular location is the cytoplasm. The protein localises to the nucleus. Its function is as follows. Component of the COP9 signalosome complex (CSN), a complex involved in various cellular and developmental processes. The CSN complex is an essential regulator of the ubiquitin (Ubl) conjugation pathway by mediating the deneddylation of the cullin subunits of SCF-type E3 ligase complexes, leading to decrease the Ubl ligase activity of SCF-type complexes such as SCF, CSA or DDB2. The complex is also involved in phosphorylation of p53/TP53, JUN, I-kappa-B-alpha/NFKBIA, ITPK1 and IRF8/ICSBP, possibly via its association with CK2 and PKD kinases. CSN-dependent phosphorylation of TP53 and JUN promotes and protects degradation by the Ubl system, respectively. The protein is COP9 signalosome complex subunit 7a (COPS7A) of Pongo abelii (Sumatran orangutan).